A 1158-amino-acid polypeptide reads, in one-letter code: Hephaestin (1158 aa).

An N-terminal signal peptide occupies residues 1 to 23; the sequence is MESGHLLWALLFMQSLWPQLTDG. Plastocyanin-like domains lie at 24–206, 218–366, 370–560, 570–718, 731–903, and 911–1067; these read ATRV…LITC, QRQD…VKSC, PPVD…LLVC, KQKG…VSQC, AARI…LAIC, and HGGR…SRTE. Topologically, residues 24–1110 are extracellular; it reads ATRVYYLGIR…PIKNVEMLAS (1087 aa). Residues G70 and Y73 each coordinate Na(+). The Cu(2+) site is built by H126 and H128. An O2-binding site is contributed by H126. Positions 134, 152, and 153 each coordinate Ca(2+). N164 is a glycosylation site (N-linked (GlcNAc...) asparagine). C180 and C206 are disulfide-bonded. 2 residues coordinate Cu(2+): H186 and H188. H186 serves as a coordination point for O2. N-linked (GlcNAc...) asparagine glycosylation is present at N236. Residue S265 coordinates Na(+). The cysteines at positions 285 and 366 are disulfide-linked. Residues H304, C347, and H352 each contribute to the Cu(2+) site. Residues F416, G425, and Y428 each coordinate Na(+). A disulfide bridge connects residues C534 and C560. A glycan (N-linked (GlcNAc...) asparagine) is linked at N588. Position 617 (S617) interacts with Na(+). An intrachain disulfide couples C637 to C718. H656, C699, H704, and M709 together coordinate Cu(2+). 2 N-linked (GlcNAc...) asparagine glycosylation sites follow: N714 and N758. Na(+) contacts are provided by F769 and G778. N-linked (GlcNAc...) asparagine glycosylation is found at N829 and N873. C877 and C903 are disulfide-bonded. N931 is a glycosylation site (N-linked (GlcNAc...) asparagine). Residues H1000, H1003, H1005, H1045, C1046, H1047, H1051, and M1056 each coordinate Cu(2+). O2 contacts are provided by H1003 and H1005. H1047 lines the O2 pocket. A helical transmembrane segment spans residues 1111–1131; sequence VLVAISVTLLLVVLALGGVVW. The Cytoplasmic segment spans residues 1132–1158; that stretch reads YQHRQRKLRRNRRSILDDSFKLLSFKQ. S1145, S1150, and S1155 each carry phosphoserine.

Belongs to the multicopper oxidase family. In terms of assembly, part of a complex composed of SLC40A1/ferroportin, TF/transferrin and HEPH/hephaestin that transfers iron from cells to transferrin. Requires Cu cation as cofactor. In terms of tissue distribution, expressed by intestinal absorptive cells (at protein level). Also detected in breast, colon, bone trabecular cells and fibroblasts.

Its subcellular location is the basolateral cell membrane. The enzyme catalyses 4 Fe(2+) + O2 + 4 H(+) = 4 Fe(3+) + 2 H2O. In terms of biological role, plasma membrane ferroxidase that mediates the extracellular conversion of ferrous/Fe(2+) iron into its ferric/Fe(3+) form. Couples ferroportin which specifically exports ferrous/Fe(2+) iron from cells to transferrin that only binds and shuttles extracellular ferric/Fe(3+) iron throughout the body. By helping iron transfer from cells to blood mainly contributes to dietary iron absorption by the intestinal epithelium and more generally regulates iron levels in the body. The chain is Hephaestin from Homo sapiens (Human).